Consider the following 395-residue polypeptide: Phosphoglycerate kinase (395 aa).

Substrate contacts are provided by residues 21 to 23, Arg-36, 59 to 62, Arg-120, and Arg-153; these read DFN and HLGR. Residues Lys-203, Gly-294, Glu-325, and 351–354 contribute to the ATP site; that span reads GGDS.

Belongs to the phosphoglycerate kinase family. In terms of assembly, monomer.

Its subcellular location is the cytoplasm. The enzyme catalyses (2R)-3-phosphoglycerate + ATP = (2R)-3-phospho-glyceroyl phosphate + ADP. It functions in the pathway carbohydrate degradation; glycolysis; pyruvate from D-glyceraldehyde 3-phosphate: step 2/5. This Finegoldia magna (strain ATCC 29328 / DSM 20472 / WAL 2508) (Peptostreptococcus magnus) protein is Phosphoglycerate kinase.